Here is a 653-residue protein sequence, read N- to C-terminus: Sodium-dependent nutrient amino acid transporter 1 (653 aa).

The disordered stretch occupies residues 1–55; sequence MELKGVHQQNGTSNGTGAAGTEGESPPPAPAPATAEAAASLETTTEKVDAEQQKT. The Cytoplasmic portion of the chain corresponds to 1-59; sequence MELKGVHQQNGTSNGTGAAGTEGESPPPAPAPATAEAAASLETTTEKVDAEQQKTERTN. Composition is skewed to low complexity over residues 10–24 and 32–43; these read NGTS…TEGE and PATAEAAASLET. Residues 44-55 show a composition bias toward basic and acidic residues; sequence TTEKVDAEQQKT. 4 helical membrane passes run 60–80, 93–113, 125–145, and 146–166; these read WGNG…LGNV, GAFL…MYYL, TVKI…QAFA, and TICI…YLFV. 2 N-linked (GlcNAc...) asparagine glycosylation sites follow: Asn202 and Asn205. 9 consecutive transmembrane segments (helical) span residues 241–261, 270–290, 319–339, 353–373, 413–433, 459–479, 486–506, 528–548, and 565–585; these read PDWK…LVIM, AAYF…VRAV, AVVQ…MFAS, IVTT…FAIL, LFSV…IVAL, ICGF…ILTL, TYVV…IYGM, CWSF…MVTI, and AGWL…MWYI.

The protein belongs to the sodium:neurotransmitter symporter (SNF) (TC 2.A.22) family.

It is found in the membrane. Functionally, unusual broad substrate spectrum amino acid:sodium cotransporter that promotes absorption of the D isomers of essential amino acids. Neutral amino acids are the preferred substrates, especially methionine and phenylalanine. The protein is Sodium-dependent nutrient amino acid transporter 1 of Drosophila pseudoobscura pseudoobscura (Fruit fly).